The chain runs to 163 residues: MALYETILIARQDITASQVEGLTETFTGILKENGGEVKKVEQWGLKTLTYRIKKNRKAHYVYIGHEAPAAAVAEMERNMSINEDVLRFMTVKVEKIEEGQTAMLTNKGERSERGPRGGFGDRGPRRDFGDRGPRRDFGDRGPRRDGDGPRAEGGRNEGEGDRA.

The disordered stretch occupies residues E97–A163. A compositionally biased stretch (basic and acidic residues) spans R122–A163.

This sequence belongs to the bacterial ribosomal protein bS6 family.

Functionally, binds together with bS18 to 16S ribosomal RNA. This Rhodospirillum centenum (strain ATCC 51521 / SW) protein is Small ribosomal subunit protein bS6.